The sequence spans 184 residues: Ethylene-responsive transcription factor ERF024 (184 aa).

The tract at residues 1 to 21 (MQGTSKDNGGRHPLYRGVRQR) is disordered. Residues 14–72 (LYRGVRQRKNSNKWVSEIREPRKPNRIWLGTFSTPEMAAIAYDVAALALKGSQAELNFP) constitute a DNA-binding region (AP2/ERF).

The protein belongs to the AP2/ERF transcription factor family. ERF subfamily.

It localises to the nucleus. Probably acts as a transcriptional activator. Binds to the GCC-box pathogenesis-related promoter element. May be involved in the regulation of gene expression by stress factors and by components of stress signal transduction pathways. The protein is Ethylene-responsive transcription factor ERF024 (ERF024) of Arabidopsis thaliana (Mouse-ear cress).